The sequence spans 152 residues: Deoxyuridine 5'-triphosphate nucleotidohydrolase (152 aa).

Residues 72-74 (RSG), N85, 89-91 (TID), and K99 each bind substrate.

It belongs to the dUTPase family. Mg(2+) serves as cofactor.

The enzyme catalyses dUTP + H2O = dUMP + diphosphate + H(+). Its pathway is pyrimidine metabolism; dUMP biosynthesis; dUMP from dCTP (dUTP route): step 2/2. In terms of biological role, this enzyme is involved in nucleotide metabolism: it produces dUMP, the immediate precursor of thymidine nucleotides and it decreases the intracellular concentration of dUTP so that uracil cannot be incorporated into DNA. The protein is Deoxyuridine 5'-triphosphate nucleotidohydrolase of Bradyrhizobium diazoefficiens (strain JCM 10833 / BCRC 13528 / IAM 13628 / NBRC 14792 / USDA 110).